A 228-amino-acid polypeptide reads, in one-letter code: Trichome differentiation protein GL1 (228 aa).

2 HTH myb-type domains span residues 11–63 (NQEY…MNYL) and 64–118 (SPNV…SKKL). 2 consecutive DNA-binding regions (H-T-H motif) follow at residues 39–63 (WNRIVRKTGLKRCGKSCRLRWMNYL) and 91–114 (WSLIAKRVPGRTDNQVKNYWNTHL).

In terms of assembly, homodimer and heterodimer with MYB82. Interacts directly with GL3 and BHLH2. Part of a complex made of GL1, GL3 or BHLH2, and TTG1. Also interacts with BHLH2/EGL3/MYC146 and BHLH12/MYC1. Interacts with MYB82. In terms of tissue distribution, expressed in leaves, stems and flowers. Expressed in trichome cells and in leaf primordia.

It localises to the nucleus. In terms of biological role, transcription activator, when associated with BHLH2/EGL3/MYC146 or BHLH12/MYC1. Involved in epidermal cell fate specification in leaves. Together with TTG1 and GL3, promotes trichome formation and endoreplication. Regulates the production of a signal that induces hair (trichome) precursor cells on leaf primordia to differentiate. Binds to the WER-binding sites (WBS) promoter regions and activates the transcription of target genes. This chain is Trichome differentiation protein GL1, found in Arabidopsis thaliana (Mouse-ear cress).